We begin with the raw amino-acid sequence, 394 residues long: Probable cytosolic iron-sulfur protein assembly protein 1 (394 aa).

WD repeat units lie at residues 10 to 49 (AHND…NFPL), 56 to 108 (AHKR…EQDS), 144 to 184 (GHEN…EEFE), 191 to 230 (DHQH…DDWS), 237 to 284 (GHGG…TEQI), 313 to 352 (IHKY…KWEI), and 359 to 394 (AHGV…IWEP).

Belongs to the WD repeat CIA1 family. In terms of assembly, interacts with NAR1.

Its subcellular location is the cytoplasm. It is found in the nucleus. Functionally, essential component of the cytosolic iron-sulfur (Fe/S) protein assembly machinery. Required for the maturation of extramitochondrial Fe/S proteins. In Debaryomyces hansenii (strain ATCC 36239 / CBS 767 / BCRC 21394 / JCM 1990 / NBRC 0083 / IGC 2968) (Yeast), this protein is Probable cytosolic iron-sulfur protein assembly protein 1.